The following is a 287-amino-acid chain: tRNA pseudouridine synthase B (287 aa).

Aspartate 38 serves as the catalytic Nucleophile.

The protein belongs to the pseudouridine synthase TruB family. Type 1 subfamily.

The catalysed reaction is uridine(55) in tRNA = pseudouridine(55) in tRNA. Its function is as follows. Responsible for synthesis of pseudouridine from uracil-55 in the psi GC loop of transfer RNAs. The polypeptide is tRNA pseudouridine synthase B (Fusobacterium nucleatum subsp. nucleatum (strain ATCC 25586 / DSM 15643 / BCRC 10681 / CIP 101130 / JCM 8532 / KCTC 2640 / LMG 13131 / VPI 4355)).